A 398-amino-acid chain; its full sequence is Glia-derived nexin (398 aa).

The first 19 residues, 1-19, serve as a signal peptide directing secretion; sequence MNWHLPLFLLASVTLPSIC. N-linked (GlcNAc...) asparagine glycosylation is found at N118 and N159.

Belongs to the serpin family.

It is found in the secreted. Its subcellular location is the extracellular space. In terms of biological role, serine protease inhibitor with activity toward thrombin, trypsin, and urokinase. Promotes neurite extension by inhibiting thrombin. Binds heparin. This chain is Glia-derived nexin (SERPINE2), found in Homo sapiens (Human).